The primary structure comprises 167 residues: Large ribosomal subunit protein uL23 (167 aa).

Positions 1-130 (MNVNEIIKGP…ELEAKNKEIA (130 aa)) are large ribosomal subunit protein uL23. Disordered stretches follow at residues 91-112 (FEDESPQDQKDSETISENTDEK) and 137-167 (QAELAKKESETNENQEKKIENQTENQENSAK). 2 stretches are compositionally biased toward basic and acidic residues: residues 97–112 (QDQKDSETISENTDEK) and 137–157 (QAELAKKESETNENQEKKIEN). Residues 131 to 167 (EKLAKKQAELAKKESETNENQEKKIENQTENQENSAK) form a unknown region. A compositionally biased stretch (polar residues) spans 158–167 (QTENQENSAK).

It belongs to the universal ribosomal protein uL23 family. As to quaternary structure, part of the 50S ribosomal subunit. Contacts protein L29, and trigger factor when it is bound to the ribosome.

In terms of biological role, one of the early assembly proteins it binds 23S rRNA. One of the proteins that surrounds the polypeptide exit tunnel on the outside of the ribosome. Forms the main docking site for trigger factor binding to the ribosome. The sequence is that of Large ribosomal subunit protein uL23 from Mesomycoplasma hyopneumoniae (strain 7448) (Mycoplasma hyopneumoniae).